The sequence spans 273 residues: Zinc finger protein AZF2 (273 aa).

The disordered stretch occupies residues 33 to 64 (LKRKRSKRQRSHSPSSSSSSPPRSRPKSQNQD). The span at 34-43 (KRKRSKRQRS) shows a compositional bias: basic residues. The span at 44–54 (HSPSSSSSSPP) shows a compositional bias: low complexity. 2 C2H2-type zinc fingers span residues 106 to 128 (YKCNVCEKAFPSYQALGGHKASH) and 165 to 187 (HECSICHKVFPTGQALGGHKRCH). The tract at residues 195–215 (GGGGGSKSISHSGSVSSTVSE) is disordered. The segment covering 201-213 (KSISHSGSVSSTV) has biased composition (low complexity).

In terms of tissue distribution, expressed in roots, radicles, cotyledons, hypocotyls, leaf veins, stems, sepals, petals, stamens, placenta, funiculi and maturated seeds.

It localises to the nucleus. Functionally, transcriptional repressor involved in the inhibition of plant growth under abiotic stress conditions. Can repress the expression of various genes, including osmotic stress and abscisic acid-repressive genes and auxin-inducible genes, by binding to their promoter regions in a DNA sequence-specific manner. Acts as a negative regulator of abscisic acid (ABA) signaling during seed germination. Probably involved in jasmonate (JA) early signaling response. May regulate the expression of the JA biosynthesis gene LOX3 and control the expression of TIFY10A/JAZ1, a key repressor in the JA signaling cascade. May act as a positive regulator of leaf senescence. Has been identified as a suppressor of the deficiency of yeast snf4 mutant to grow on non-fermentable carbon source. The chain is Zinc finger protein AZF2 (AZF2) from Arabidopsis thaliana (Mouse-ear cress).